The primary structure comprises 221 residues: Phosphoribosylformylglycinamidine synthase subunit PurQ (221 aa).

The Glutamine amidotransferase type-1 domain maps to 6–221 (VGVVVFPGSN…LFTLKSLILK (216 aa)). Cys89 acts as the Nucleophile in catalysis. Catalysis depends on residues His197 and Glu199.

In terms of assembly, part of the FGAM synthase complex composed of 1 PurL, 1 PurQ and 2 PurS subunits.

It is found in the cytoplasm. It carries out the reaction N(2)-formyl-N(1)-(5-phospho-beta-D-ribosyl)glycinamide + L-glutamine + ATP + H2O = 2-formamido-N(1)-(5-O-phospho-beta-D-ribosyl)acetamidine + L-glutamate + ADP + phosphate + H(+). The catalysed reaction is L-glutamine + H2O = L-glutamate + NH4(+). It participates in purine metabolism; IMP biosynthesis via de novo pathway; 5-amino-1-(5-phospho-D-ribosyl)imidazole from N(2)-formyl-N(1)-(5-phospho-D-ribosyl)glycinamide: step 1/2. Functionally, part of the phosphoribosylformylglycinamidine synthase complex involved in the purines biosynthetic pathway. Catalyzes the ATP-dependent conversion of formylglycinamide ribonucleotide (FGAR) and glutamine to yield formylglycinamidine ribonucleotide (FGAM) and glutamate. The FGAM synthase complex is composed of three subunits. PurQ produces an ammonia molecule by converting glutamine to glutamate. PurL transfers the ammonia molecule to FGAR to form FGAM in an ATP-dependent manner. PurS interacts with PurQ and PurL and is thought to assist in the transfer of the ammonia molecule from PurQ to PurL. The polypeptide is Phosphoribosylformylglycinamidine synthase subunit PurQ (Prochlorococcus marinus (strain MIT 9312)).